The sequence spans 479 residues: Ammonium transporter Rh type C (479 aa).

Residues 1–9 (MAWNTNLRW) are Cytoplasmic-facing. The chain crosses the membrane as a helical span at residues 10 to 30 (RLPLTCLLLQVAMVILFGVFV). Residues 31 to 60 (RYDFDADAHWWTERKHKNLSEVENEFYYRY) are Extracellular-facing. Residue asparagine 48 is glycosylated (N-linked (GlcNAc...) asparagine). A helical membrane pass occupies residues 61-81 (PSFQDVHVMVFVGFGFLMTFL). The Cytoplasmic segment spans residues 82-85 (QRYG). A helical transmembrane segment spans residues 86-106 (FSAVGFNFLLAAFGIQWALLM). Over 107–123 (QGWFHFLEGRYIVVGVE) the chain is Extracellular. Residues 124-144 (NLINADFCVASVCVAFGAVLG) form a helical membrane-spanning segment. At 145-148 (KVSP) the chain is on the cytoplasmic side. A helical transmembrane segment spans residues 149–169 (IQLLIMTFFQVTLFAVNEFIL). The Extracellular portion of the chain corresponds to 170–177 (LNLLKVKD). Residues 178-200 (AGGSMTIHTFYAYFELTVTRILY) form a helical membrane-spanning segment. Over 201–218 (RRNLEQSKERQSSAYQSD) the chain is Cytoplasmic. The chain crosses the membrane as a helical span at residues 219-239 (LFAMIGTLFLWMYWPSFNSAI). Over 240–250 (SYHGDSQHRAA) the chain is Extracellular. The chain crosses the membrane as a helical span at residues 251 to 271 (INTYCSLAACVLTSVAVSSAL). Topologically, residues 272 to 281 (HKKGKLDMVH) are cytoplasmic. The helical transmembrane segment at 282 to 302 (IQNATLAGGVAVGTTAEMMLM) threads the bilayer. Position 303 (proline 303) is a topological domain, extracellular. The helical transmembrane segment at 304–324 (YGALIIGFICGIISTLGFVYL) threads the bilayer. The Cytoplasmic portion of the chain corresponds to 325-345 (TPFLESRLHIQDTCGINNLHG). The chain crosses the membrane as a helical span at residues 346-366 (IPGIIGGIVGAVTAASASLEV). Residues 367–394 (YGKEGLVHSFDFQDFKRDWTARTQGKFQ) are Extracellular-facing. Residues 395 to 415 (IYGLLVTLAMALMGGIIVGLI) traverse the membrane as a helical segment. The Cytoplasmic segment spans residues 416–479 (LRLPFWGQPS…PMASSVPLVP (64 aa)).

Belongs to the ammonium transporter (TC 2.A.49) family. Rh subfamily. In terms of assembly, homotrimer. In terms of processing, N-glycosylated.

The protein resides in the apical cell membrane. The catalysed reaction is NH4(+)(in) = NH4(+)(out). The enzyme catalyses methylamine(out) = methylamine(in). It carries out the reaction CO2(out) = CO2(in). In terms of biological role, ammonium transporter involved in the maintenance of acid-base homeostasis. Transports ammonium and its related derivative methylammonium across the plasma membrane of epithelial cells likely contributing to renal transepithelial ammonia transport and ammonia metabolism. Postulated to primarily mediate an electroneutral bidirectional transport of NH3 ammonia species according to a mechanism that implies interaction of an NH4(+) ion with acidic residues of the pore entry followed by dissociation of NH4(+) into NH3 and H(+). As a result NH3 transits through the central pore and is protonated on the extracellular side reforming NH4(+). May act as a CO2 channel providing for renal acid secretion. This is Ammonium transporter Rh type C (RHCG) from Macaca mulatta (Rhesus macaque).